The sequence spans 357 residues: UDP-N-acetylglucosamine--N-acetylmuramyl-(pentapeptide) pyrophosphoryl-undecaprenol N-acetylglucosamine transferase (357 aa).

UDP-N-acetyl-alpha-D-glucosamine contacts are provided by residues 10 to 12, N124, S189, I244, and Q289; that span reads TGG.

It belongs to the glycosyltransferase 28 family. MurG subfamily.

The protein resides in the cell membrane. The catalysed reaction is Mur2Ac(oyl-L-Ala-gamma-D-Glu-L-Lys-D-Ala-D-Ala)-di-trans,octa-cis-undecaprenyl diphosphate + UDP-N-acetyl-alpha-D-glucosamine = beta-D-GlcNAc-(1-&gt;4)-Mur2Ac(oyl-L-Ala-gamma-D-Glu-L-Lys-D-Ala-D-Ala)-di-trans,octa-cis-undecaprenyl diphosphate + UDP + H(+). Its pathway is cell wall biogenesis; peptidoglycan biosynthesis. Cell wall formation. Catalyzes the transfer of a GlcNAc subunit on undecaprenyl-pyrophosphoryl-MurNAc-pentapeptide (lipid intermediate I) to form undecaprenyl-pyrophosphoryl-MurNAc-(pentapeptide)GlcNAc (lipid intermediate II). This chain is UDP-N-acetylglucosamine--N-acetylmuramyl-(pentapeptide) pyrophosphoryl-undecaprenol N-acetylglucosamine transferase, found in Lactococcus lactis subsp. lactis (strain IL1403) (Streptococcus lactis).